We begin with the raw amino-acid sequence, 902 residues long: Leucine-rich repeat-containing G-protein coupled receptor 5 (902 aa).

Positions 1–22 are cleaved as a signal peptide; it reads MDTSKTSFFLFSVLCSLQLVGA. Topologically, residues 23-558 are extracellular; it reads ARPGKQQRSC…HLFGSWLTRT (536 aa). 2 disulfide bridges follow: cysteine 32/cysteine 38 and cysteine 36/cysteine 49. An LRRNT domain is found at 32–61; the sequence is CPTPCECEQEGMLVRVDCSDRALTSLPRNL. LRR repeat units follow at residues 41–61, 62–85, 86–109, 111–133, 134–157, 159–181, 182–205, 207–229, 230–253, 254–276, 278–300, 302–324, 325–347, 348–372, 374–393, 394–417, and 418–441; these read EGML…PRNL, SIFT…VMHN, LHFL…AFAG, GSLK…ALHN, LRSL…SFNG, FSLR…ALES, LSAL…AFRN, SSLV…CFDG, LHSL…IKTL, KNLK…AFIG, PSLI…AFQH, PELR…LTGT, TSLE…VCTQ, LPNL…GCQR, QKID…TFQQ, LVGL…SFSS, and LPSL…GLHG. N-linked (GlcNAc...) asparagine glycosylation is found at asparagine 60 and asparagine 74. Asparagine 205 carries N-linked (GlcNAc...) asparagine glycosylation. A disulfide bridge links cysteine 345 with cysteine 370. A disulfide bridge links cysteine 476 with cysteine 537. The N-linked (GlcNAc...) asparagine glycan is linked to asparagine 496. A helical transmembrane segment spans residues 559–579; the sequence is GVWLIVLLSFVCNALVIATVF. Over 580–589 the chain is Cytoplasmic; it reads RPLSYVPSIK. Residues 590–610 form a helical membrane-spanning segment; it reads LLIGLIAIMNTLMGLSSGVLA. Residues 598–619 form an LRR 18 repeat; sequence MNTLMGLSSGVLATVDALTFGN. Over 611 to 634 the chain is Extracellular; the sequence is TVDALTFGNFAQYGAWWESGVGCQ. Residues cysteine 633 and cysteine 708 are joined by a disulfide bond. The helical transmembrane segment at 635-655 threads the bilayer; it reads ITGFLSVFAAETSIFLLTVAA. Residues 656–678 lie on the Cytoplasmic side of the membrane; the sequence is LERGFSIKCTTKFETKSSFINVK. The chain crosses the membrane as a helical span at residues 679 to 699; that stretch reads LSIVFCFLLSIVIAVSPLLSG. Residues 700 to 718 lie on the Extracellular side of the membrane; the sequence is STYGTSPLCFPLLFGDPSS. The helical transmembrane segment at 719–739 threads the bilayer; sequence MGFMVALVLLNSLCFLVMTIA. Residues 740-763 are Cytoplasmic-facing; the sequence is YTKLYCSLEKGELENIWDCSMVKH. Residues 764-784 traverse the membrane as a helical segment; that stretch reads IALLLFTNCILYCPVAFLSFS. Topologically, residues 785-798 are extracellular; the sequence is SLLNLTFISPEVNK. Asparagine 788 and asparagine 797 each carry an N-linked (GlcNAc...) asparagine glycan. The helical transmembrane segment at 799–819 threads the bilayer; it reads SILLLIIPLPACLNPLLYILF. Residues 820 to 902 lie on the Cytoplasmic side of the membrane; sequence NPHFKEDIGS…LSAVAFVPCH (83 aa).

Belongs to the G-protein coupled receptor 1 family.

The protein localises to the cell membrane. The protein resides in the golgi apparatus. Its subcellular location is the trans-Golgi network membrane. Receptor for R-spondins that potentiates the canonical Wnt signaling pathway and acts as a stem cell marker of the intestinal epithelium and the hair follicle. Upon binding to R-spondins (RSPO1, RSPO2, RSPO3 or RSPO4), associates with phosphorylated LRP6 and frizzled receptors that are activated by extracellular Wnt receptors, triggering the canonical Wnt signaling pathway to increase expression of target genes. In contrast to classical G-protein coupled receptors, does not activate heterotrimeric G-proteins to transduce the signal. Involved in the development and/or maintenance of the adult intestinal stem cells during postembryonic development. In Xenopus tropicalis (Western clawed frog), this protein is Leucine-rich repeat-containing G-protein coupled receptor 5 (lgr5).